Reading from the N-terminus, the 142-residue chain is Thioredoxin-like protein YLS8 (142 aa).

This sequence belongs to the DIM1 family. Expressed in roots, leaves, stems, cauline leaves and flowers.

The sequence is that of Thioredoxin-like protein YLS8 (YLS8) from Arabidopsis thaliana (Mouse-ear cress).